Reading from the N-terminus, the 595-residue chain is MSLFRTYARVLTYLNKEKNASLLICSANVMLAIITIAEPILFGHVIDSIAEKSAIIPTLTIWVCFGISHILAYVLIARGADRLVHRRRLAVLTESFERIIAMPLIWHQQRGTSNALHILLRAVDSMATIWLDFMRQHLSTLVALFVLIPIAFNMNWRLSIVLVVLAIIYVLIARLVMRKTKDGQAAVECYHHNLFQHVSDSISNVSIVQSYNRIKEETSILHQHTNDLLKAQNPVLNWWALASGLNRMASTISIVCVLLLGAFFVAKGQLRVGEVVSFVGFAQLMISRLDQMSNFINLTISSQAKLQEFFAMEDSTFQSKEPENLPSLQNVKGAIQFHHVTYKFPNSSQGIFDISFEVKTGQTVAIVGPTGAGKTTLINLLQRIYDPTLGHISIDGINIRSVNRESLRKSLATVFQDAGLFNRTIHDNISIGRTTATNEELYEAAKIAAAHDFILKKTDRYNTMIGEQGSQLSGGEKQRLAIARAVLKNAPILILDEATSALDVETEARVKDALDCISHNRTTFIIAHRLSTVRNADLVLFLEQGHLIEKGSFQELIAKGGRFYKLLKAGSLAINQPTIETKDENVIPLHEAIAS.

The region spanning 21–301 (SLLICSANVM…MSNFINLTIS (281 aa)) is the ABC transmembrane type-1 domain. 5 helical membrane passes run 22–42 (LLICSANVMLAIITIAEPILF), 55–75 (IIPTLTIWVCFGISHILAYVL), 129–149 (IWLDFMRQHLSTLVALFVLIP), 152–172 (FNMNWRLSIVLVVLAIIYVLI), and 248–268 (MASTISIVCVLLLGAFFVAKG). One can recognise an ABC transporter domain in the interval 335-569 (IQFHHVTYKF…GGRFYKLLKA (235 aa)). 368–375 (GPTGAGKT) is an ATP binding site.

Belongs to the ABC transporter superfamily. Beta-(1--&gt;2)glucan exporter (TC 3.A.1.108.1) family. As to quaternary structure, homodimer.

Its subcellular location is the cell inner membrane. The catalysed reaction is [(1-&gt;2)-beta-D-glucosyl](n)(in) + ATP + H2O = [(1-&gt;2)-beta-D-glucosyl](n)(out) + ADP + phosphate + H(+). Its function is as follows. Involved in beta-(1--&gt;2)glucan export. Transmembrane domains (TMD) form a pore in the inner membrane and the ATP-binding domain (NBD) is responsible for energy generation. This Bartonella henselae (strain ATCC 49882 / DSM 28221 / CCUG 30454 / Houston 1) (Rochalimaea henselae) protein is Beta-(1--&gt;2)glucan export ATP-binding/permease protein NdvA.